The sequence spans 261 residues: 4-hydroxy-tetrahydrodipicolinate reductase (261 aa).

9 to 14 (GCLGRM) contacts NAD(+). Arg36 lines the NADP(+) pocket. NAD(+)-binding positions include 97-99 (GTT) and 118-121 (SANM). His151 functions as the Proton donor/acceptor in the catalytic mechanism. His152 contributes to the (S)-2,3,4,5-tetrahydrodipicolinate binding site. The Proton donor role is filled by Lys155. Position 161–162 (161–162 (GT)) interacts with (S)-2,3,4,5-tetrahydrodipicolinate.

It belongs to the DapB family.

Its subcellular location is the cytoplasm. The catalysed reaction is (S)-2,3,4,5-tetrahydrodipicolinate + NAD(+) + H2O = (2S,4S)-4-hydroxy-2,3,4,5-tetrahydrodipicolinate + NADH + H(+). It catalyses the reaction (S)-2,3,4,5-tetrahydrodipicolinate + NADP(+) + H2O = (2S,4S)-4-hydroxy-2,3,4,5-tetrahydrodipicolinate + NADPH + H(+). Its pathway is amino-acid biosynthesis; L-lysine biosynthesis via DAP pathway; (S)-tetrahydrodipicolinate from L-aspartate: step 4/4. Functionally, catalyzes the conversion of 4-hydroxy-tetrahydrodipicolinate (HTPA) to tetrahydrodipicolinate. The chain is 4-hydroxy-tetrahydrodipicolinate reductase from Wolbachia pipientis wMel.